An 872-amino-acid chain; its full sequence is Alanine--tRNA ligase (872 aa).

Zn(2+) is bound by residues histidine 567, histidine 571, cysteine 669, and histidine 673.

It belongs to the class-II aminoacyl-tRNA synthetase family. The cofactor is Zn(2+).

It is found in the cytoplasm. It carries out the reaction tRNA(Ala) + L-alanine + ATP = L-alanyl-tRNA(Ala) + AMP + diphosphate. Functionally, catalyzes the attachment of alanine to tRNA(Ala) in a two-step reaction: alanine is first activated by ATP to form Ala-AMP and then transferred to the acceptor end of tRNA(Ala). Also edits incorrectly charged Ser-tRNA(Ala) and Gly-tRNA(Ala) via its editing domain. The protein is Alanine--tRNA ligase of Streptococcus pyogenes serotype M1.